A 429-amino-acid chain; its full sequence is Argininosuccinate lyase (429 aa).

It belongs to the lyase 1 family. Argininosuccinate lyase subfamily.

The protein localises to the cytoplasm. It carries out the reaction 2-(N(omega)-L-arginino)succinate = fumarate + L-arginine. Its pathway is amino-acid biosynthesis; L-arginine biosynthesis; L-arginine from L-ornithine and carbamoyl phosphate: step 3/3. In Pyrobaculum arsenaticum (strain DSM 13514 / JCM 11321 / PZ6), this protein is Argininosuccinate lyase.